The primary structure comprises 158 residues: Low molecular weight phosphotyrosine protein phosphatase (158 aa).

Residue Ala-2 is modified to N-acetylalanine. Cys-13 serves as the catalytic Nucleophile. Residue Arg-19 is part of the active site. Asp-130 serves as the catalytic Proton donor. Tyr-132 and Tyr-133 each carry phosphotyrosine.

Belongs to the low molecular weight phosphotyrosine protein phosphatase family. In terms of assembly, interacts with EPHA2; dephosphorylates EPHA2. Interacts with EPHB1. Interacts with the SH3 domain of SPTAN1. Post-translationally, phosphorylated by LCK. Phosphorylation at Tyr-132 increases its phosphatase activity.

The protein resides in the cytoplasm. It catalyses the reaction O-phospho-L-tyrosyl-[protein] + H2O = L-tyrosyl-[protein] + phosphate. The enzyme catalyses a phosphate monoester + H2O = an alcohol + phosphate. Its activity is regulated as follows. Inhibited by sulfhydryl reagents. Acts on tyrosine phosphorylated proteins, low-MW aryl phosphates and natural and synthetic acyl phosphates with differences in substrate specificity between isoform 1 and isoform 2. The sequence is that of Low molecular weight phosphotyrosine protein phosphatase (ACP1) from Sus scrofa (Pig).